Consider the following 574-residue polypeptide: Arginine--tRNA ligase (574 aa).

Residues 124 to 134 carry the 'HIGH' region motif; that stretch reads ANPNGPLHIGH.

Belongs to the class-I aminoacyl-tRNA synthetase family.

Its subcellular location is the cytoplasm. The enzyme catalyses tRNA(Arg) + L-arginine + ATP = L-arginyl-tRNA(Arg) + AMP + diphosphate. The chain is Arginine--tRNA ligase from Methanococcus aeolicus (strain ATCC BAA-1280 / DSM 17508 / OCM 812 / Nankai-3).